The primary structure comprises 160 residues: Baculoviral IAP repeat-containing protein 5.1 (160 aa).

The BIR repeat unit spans residues 27 to 97; it reads RLATFADWPF…KRSASCGFLS (71 aa). Thr43 is modified (phosphothreonine; by CDK1). Zn(2+) is bound by residues Cys66, Cys69, His86, and Cys93.

Belongs to the IAP family. As to quaternary structure, component of the CPC at least composed of survivin/birc5, incenp, cdca8/borealin and/or cdca9/dasra-A, and aurkb/aurora-B. Interacts directly with incenp (via N-terminus), and may weakly interact with aurkb (via N-terminus) to stabilize the complex. Interacts with GTP-bound ran in both the S and M phases of the cell cycle. Also found in a complex with ubiquitin-mediated signaling proteins including at least usp9x/xFAM, nploc4/npl4 and ufd1. Post-translationally, ubiquitination is required for centrosome-targeting.

Its subcellular location is the cytoplasm. The protein resides in the nucleus. The protein localises to the chromosome. It localises to the centromere. It is found in the cytoskeleton. Its subcellular location is the spindle. Component of the chromosomal passenger complex (CPC), a complex that acts as a key regulator of mitosis. The CPC complex has essential functions at the centromere in ensuring correct chromosome alignment and segregation and is required for chromatin-induced microtubule stabilization and spindle assembly. Stimulates the mitotic kinase activity of aurkb/aurora-B in the CPC. Does not appear to exhibit anti-apoptotic activity. The sequence is that of Baculoviral IAP repeat-containing protein 5.1 (birc5.1) from Xenopus tropicalis (Western clawed frog).